A 609-amino-acid polypeptide reads, in one-letter code: MSNYPPTVAAQPTTTANPLLQRHQSEQRRRELPKIVETESTSMDITIGQSKQPQFLKSIDELAAFSVAVETFKRQFDDLQKHIESIENAIDSKLESNGVVLAARNNNFHQPMLSPPRNNVSVETTVTVSQPSQEIVPETSNKPEGGRMCELMCSKGLRKYIYANISDQAKLMEEIPSALKLAKEPAKFVLDCIGKFYLQGRRAFTKESPMSSARQVSLLILESFLLMPDRGKGKVKIESWIKDEAETAAVAWRKRLMTEGGLAAAEKMDARGLLLLVACFGVPSNFRSTDLLDLIRMSGSNEIAGALKRSQFLVPMVSGIVESSIKRGMHIEALEMVYTFGMEDKFSAALVLTSFLKMSKESFERAKRKAQSPLAFKEAATKQLAVLSSVMQCMETHKLDPAKELPGWQIKEQIVSLEKDTLQLDKEMEEKARSLSLMEEAALAKRMYNQQIKRPRLSPMEMPPVTSSSYSPIYRDRSFPSQRDDDQDEISALVSSYLGPSTSFPHRSRRSPEYMVPLPHGGLGRSVYAYEHLAPNSYSPGHGHRLHRQYSPSLVHGQRHPLQYSPPIHGQQQLPYGIQRVYRHSPSEERYLGLSNQRSPRSNSSLDPK.

Over residues 1–18 (MSNYPPTVAAQPTTTANP) the composition is skewed to low complexity. Residues 1–31 (MSNYPPTVAAQPTTTANPLLQRHQSEQRRRE) form a disordered region. Coiled coils occupy residues 60-97 (DELA…LESN) and 409-440 (QIKE…LMEE). Disordered regions lie at residues 454-488 (RPRL…DDQD) and 587-609 (SEER…LDPK). Residues 474–484 (YRDRSFPSQRD) show a composition bias toward basic and acidic residues. The segment covering 594-609 (LSNQRSPRSNSSLDPK) has biased composition (polar residues).

Belongs to the Frigida family. As to quaternary structure, homodimer. Component of the transcription activator complex FRI-C composed of FRI, FRL1, SUF4, FLX and FES1. Interacts (via N-terminus) with FRL1 and (via C-terminus) with FLX (via N-terminus), SUF4 (via C-terminus) and FES1 (via C-terminus). Interacts with ASHH2 and RIN1, a component of the SWR1 chromatin-remodeling complex. Interacts with CBP20, FIP1 and FIP2. Expressed in ovules, but not in stamens.

It localises to the nucleus speckle. Required for the regulation of flowering time in the late-flowering phenotype. Involved in the enrichment of a WDR5A-containing COMPASS-like complex at the 'FLOWERING LOCUS C' that trimethylates histone H3 'Lys-4', leading to FLC up-regulation and RNA levels increase. Variants with an early-flowering phenotype (Including cv. Columbia, cv. Landsberg Erecta and cv. Wassilewskija) show loss-of-function mutations of FRI. Able to delay flowering independently of FRL1 activity. Dispensable for the reactivation of FLC in early embryogenesis, but required to maintain high levels of FLC expression in later embryonic and vegetative development. Suppresses the repression of FLC by the autonomous pathway, but has no effect on the expression of the genes involved in this pathway. This chain is Protein FRIGIDA, found in Arabidopsis thaliana (Mouse-ear cress).